Reading from the N-terminus, the 402-residue chain is Elongation factor Tu (402 aa).

A tr-type G domain is found at lysine 16–valine 211. Positions glycine 25–threonine 32 are G1. Residue glycine 25–threonine 32 participates in GTP binding. Threonine 32 is a Mg(2+) binding site. A G2 region spans residues glycine 66–asparagine 70. Residues aspartate 87–glycine 90 are G3. GTP is bound by residues aspartate 87–histidine 91 and asparagine 142–aspartate 145. The interval asparagine 142–aspartate 145 is G4. The interval serine 181 to arginine 183 is G5.

It belongs to the TRAFAC class translation factor GTPase superfamily. Classic translation factor GTPase family. EF-Tu/EF-1A subfamily. In terms of assembly, monomer.

The protein localises to the cytoplasm. It carries out the reaction GTP + H2O = GDP + phosphate + H(+). Functionally, GTP hydrolase that promotes the GTP-dependent binding of aminoacyl-tRNA to the A-site of ribosomes during protein biosynthesis. The protein is Elongation factor Tu of Mesomycoplasma hyopneumoniae (strain 232) (Mycoplasma hyopneumoniae).